The sequence spans 109 residues: Ribulose bisphosphate carboxylase small subunit (109 aa).

It belongs to the RuBisCO small chain family. As to quaternary structure, heterohexadecamer of 8 large and 8 small subunits.

The protein localises to the carboxysome. RuBisCO catalyzes two reactions: the carboxylation of D-ribulose 1,5-bisphosphate, the primary event in carbon dioxide fixation, as well as the oxidative fragmentation of the pentose substrate in the photorespiration process. Both reactions occur simultaneously and in competition at the same active site. Although the small subunit is not catalytic it is essential for maximal activity. The sequence is that of Ribulose bisphosphate carboxylase small subunit from Prochlorothrix hollandica.